Here is a 185-residue protein sequence, read N- to C-terminus: Gastrokine-1 (185 aa).

Residues 1–20 (MKFTIVFAGLLGVFLAPALA) form the signal peptide. The BRICHOS domain occupies 54–150 (NNGWDSWNSI…MCRGIPTYMA (97 aa)). Cysteine 81 and cysteine 142 are oxidised to a cystine.

The protein belongs to the gastrokine family. Expressed in stomach (at protein level). No expression is detected in cancer tissue or gastric cancer cell lines.

It localises to the secreted. It is found in the cytoplasmic granule. The protein resides in the golgi apparatus. Functionally, has mitogenic activity and may be involved in maintaining the integrity of the gastric mucosal epithelium. This chain is Gastrokine-1 (GKN1), found in Homo sapiens (Human).